The sequence spans 455 residues: Ribulose bisphosphate carboxylase large chain (455 aa).

Position 5 is an N6,N6,N6-trimethyllysine (Lys5). Substrate is bound by residues Asn114 and Thr164. Lys166 serves as the catalytic Proton acceptor. Lys168 contacts substrate. Residues Lys192, Asp194, and Glu195 each coordinate Mg(2+). N6-carboxylysine is present on Lys192. His285 (proton acceptor) is an active-site residue. Positions 286, 318, and 370 each coordinate substrate.

It belongs to the RuBisCO large chain family. Type I subfamily. In terms of assembly, heterohexadecamer of 8 large chains and 8 small chains; disulfide-linked. The disulfide link is formed within the large subunit homodimers. The cofactor is Mg(2+). The disulfide bond which can form in the large chain dimeric partners within the hexadecamer appears to be associated with oxidative stress and protein turnover.

Its subcellular location is the plastid. The protein localises to the chloroplast. The enzyme catalyses 2 (2R)-3-phosphoglycerate + 2 H(+) = D-ribulose 1,5-bisphosphate + CO2 + H2O. It carries out the reaction D-ribulose 1,5-bisphosphate + O2 = 2-phosphoglycolate + (2R)-3-phosphoglycerate + 2 H(+). RuBisCO catalyzes two reactions: the carboxylation of D-ribulose 1,5-bisphosphate, the primary event in carbon dioxide fixation, as well as the oxidative fragmentation of the pentose substrate in the photorespiration process. Both reactions occur simultaneously and in competition at the same active site. This is Ribulose bisphosphate carboxylase large chain from Lupinus luteus (European yellow lupine).